The chain runs to 403 residues: GTPase Obg (403 aa).

Positions 1–159 (MKFIDESLIR…RDLLLELMLL (159 aa)) constitute an Obg domain. In terms of domain architecture, OBG-type G spans 160 to 333 (ADVGMLGFPN…LCRDIMDFII (174 aa)). Residues 166-173 (GFPNAGKS), 191-195 (FTTLV), 213-216 (DIPG), 283-286 (NKID), and 314-316 (SAA) each bind GTP. Mg(2+) is bound by residues Ser-173 and Thr-193. Residues 363 to 403 (EYQFDDDEDWDDDWTEEDDDEDWDDDWTEEDDEGIEFIYKP) form a disordered region. Positions 365-397 (QFDDDEDWDDDWTEEDDDEDWDDDWTEEDDEGI) are enriched in acidic residues.

The protein belongs to the TRAFAC class OBG-HflX-like GTPase superfamily. OBG GTPase family. In terms of assembly, monomer. Requires Mg(2+) as cofactor.

It is found in the cytoplasm. In terms of biological role, an essential GTPase which binds GTP, GDP and possibly (p)ppGpp with moderate affinity, with high nucleotide exchange rates and a fairly low GTP hydrolysis rate. Plays a role in control of the cell cycle, stress response, ribosome biogenesis and in those bacteria that undergo differentiation, in morphogenesis control. This is GTPase Obg from Haemophilus influenzae (strain PittEE).